The primary structure comprises 62 residues: uncharacterized protein (62 aa).

Its subcellular location is the plastid. It localises to the chloroplast. This is an uncharacterized protein from Guillardia theta (Cryptophyte).